The sequence spans 105 residues: Nucleoid-associated protein TTHA1599 (105 aa).

The protein belongs to the YbaB/EbfC family. Homodimer.

The protein localises to the cytoplasm. The protein resides in the nucleoid. In terms of biological role, binds to DNA and alters its conformation. May be involved in regulation of gene expression, nucleoid organization and DNA protection. The polypeptide is Nucleoid-associated protein TTHA1599 (Thermus thermophilus (strain ATCC 27634 / DSM 579 / HB8)).